Here is a 418-residue protein sequence, read N- to C-terminus: Serine hydroxymethyltransferase (418 aa).

Residues Leu121 and 125 to 127 (GHL) contribute to the (6S)-5,6,7,8-tetrahydrofolate site. Lys230 carries the post-translational modification N6-(pyridoxal phosphate)lysine. Residue 355 to 357 (SPF) participates in (6S)-5,6,7,8-tetrahydrofolate binding.

Belongs to the SHMT family. Homodimer. Requires pyridoxal 5'-phosphate as cofactor.

The protein localises to the cytoplasm. The enzyme catalyses (6R)-5,10-methylene-5,6,7,8-tetrahydrofolate + glycine + H2O = (6S)-5,6,7,8-tetrahydrofolate + L-serine. The protein operates within one-carbon metabolism; tetrahydrofolate interconversion. It functions in the pathway amino-acid biosynthesis; glycine biosynthesis; glycine from L-serine: step 1/1. In terms of biological role, catalyzes the reversible interconversion of serine and glycine with tetrahydrofolate (THF) serving as the one-carbon carrier. This reaction serves as the major source of one-carbon groups required for the biosynthesis of purines, thymidylate, methionine, and other important biomolecules. Also exhibits THF-independent aldolase activity toward beta-hydroxyamino acids, producing glycine and aldehydes, via a retro-aldol mechanism. The sequence is that of Serine hydroxymethyltransferase from Streptococcus pyogenes serotype M18 (strain MGAS8232).